Here is a 300-residue protein sequence, read N- to C-terminus: UDP-N-acetylenolpyruvoylglucosamine reductase (300 aa).

The region spanning Lys-28 to Gly-193 is the FAD-binding PCMH-type domain. Residue Arg-172 is part of the active site. Ser-222 serves as the catalytic Proton donor. Glu-292 is a catalytic residue.

The protein belongs to the MurB family. FAD is required as a cofactor.

It localises to the cytoplasm. The catalysed reaction is UDP-N-acetyl-alpha-D-muramate + NADP(+) = UDP-N-acetyl-3-O-(1-carboxyvinyl)-alpha-D-glucosamine + NADPH + H(+). It functions in the pathway cell wall biogenesis; peptidoglycan biosynthesis. Cell wall formation. This is UDP-N-acetylenolpyruvoylglucosamine reductase from Enterococcus faecalis (strain ATCC 700802 / V583).